An 88-amino-acid chain; its full sequence is UPF0250 protein Sfri_0694 (88 aa).

It belongs to the UPF0250 family.

In Shewanella frigidimarina (strain NCIMB 400), this protein is UPF0250 protein Sfri_0694.